The following is a 234-amino-acid chain: Adenosine 5'-phosphosulfate reductase (234 aa).

The [4Fe-4S] cluster site is built by Cys120, Cys121, Cys203, and Cys206. Cys229 functions as the Nucleophile; cysteine thiosulfonate intermediate in the catalytic mechanism.

The protein belongs to the PAPS reductase family. CysH subfamily. The cofactor is [4Fe-4S] cluster.

It localises to the cytoplasm. The enzyme catalyses [thioredoxin]-disulfide + sulfite + AMP + 2 H(+) = adenosine 5'-phosphosulfate + [thioredoxin]-dithiol. Its pathway is sulfur metabolism; hydrogen sulfide biosynthesis; sulfite from sulfate. Catalyzes the formation of sulfite from adenosine 5'-phosphosulfate (APS) using thioredoxin as an electron donor. The polypeptide is Adenosine 5'-phosphosulfate reductase (Bacillus thuringiensis (strain Al Hakam)).